An 89-amino-acid polypeptide reads, in one-letter code: HssA/B-like protein DDB_G0295685 (89 aa).

This sequence belongs to the hssA/B family.

This is HssA/B-like protein DDB_G0295685 from Dictyostelium discoideum (Social amoeba).